Here is a 334-residue protein sequence, read N- to C-terminus: tRNA U34 carboxymethyltransferase (334 aa).

Carboxy-S-adenosyl-L-methionine-binding positions include Lys-91, Trp-105, Lys-110, Gly-130, 152–154 (DPT), 181–182 (IE), Met-196, Tyr-200, and Arg-315.

The protein belongs to the class I-like SAM-binding methyltransferase superfamily. CmoB family. Homotetramer.

The enzyme catalyses carboxy-S-adenosyl-L-methionine + 5-hydroxyuridine(34) in tRNA = 5-carboxymethoxyuridine(34) in tRNA + S-adenosyl-L-homocysteine + H(+). Catalyzes carboxymethyl transfer from carboxy-S-adenosyl-L-methionine (Cx-SAM) to 5-hydroxyuridine (ho5U) to form 5-carboxymethoxyuridine (cmo5U) at position 34 in tRNAs. The chain is tRNA U34 carboxymethyltransferase from Klebsiella pneumoniae subsp. pneumoniae (strain ATCC 700721 / MGH 78578).